We begin with the raw amino-acid sequence, 693 residues long: Elongation factor G (693 aa).

The 277-residue stretch at 8-284 folds into the tr-type G domain; sequence DMTRNVGIMA…AIVNYMPAPT (277 aa). GTP-binding positions include 17–24, 81–85, and 135–138; these read AHIDAGKT, DTPGH, and NKMD.

It belongs to the TRAFAC class translation factor GTPase superfamily. Classic translation factor GTPase family. EF-G/EF-2 subfamily.

It localises to the cytoplasm. In terms of biological role, catalyzes the GTP-dependent ribosomal translocation step during translation elongation. During this step, the ribosome changes from the pre-translocational (PRE) to the post-translocational (POST) state as the newly formed A-site-bound peptidyl-tRNA and P-site-bound deacylated tRNA move to the P and E sites, respectively. Catalyzes the coordinated movement of the two tRNA molecules, the mRNA and conformational changes in the ribosome. This chain is Elongation factor G, found in Fusobacterium nucleatum subsp. nucleatum (strain ATCC 25586 / DSM 15643 / BCRC 10681 / CIP 101130 / JCM 8532 / KCTC 2640 / LMG 13131 / VPI 4355).